A 107-amino-acid polypeptide reads, in one-letter code: Iron-sulfur cluster assembly protein CyaY (107 aa).

The protein belongs to the frataxin family.

Functionally, involved in iron-sulfur (Fe-S) cluster assembly. May act as a regulator of Fe-S biogenesis. The chain is Iron-sulfur cluster assembly protein CyaY from Yersinia intermedia.